The chain runs to 563 residues: Inclusion membrane protein M (563 aa).

Topologically, residues 1–36 (MVYFRAHQPRHTPKTFPLEVHHSFSDKHPQIAKAMR) are cytoplasmic. A helical transmembrane segment spans residues 37–57 (ITGIALAALSLLAVVACVIAV). A topological domain (vacuolar) is located at residue serine 58. The helical transmembrane segment at 59–79 (AGGAAIPLAVISGIAVMSGLL) threads the bilayer. Residues 80 to 252 (SAATIICSAK…VLKVALSLGV (173 aa)) lie on the Cytoplasmic side of the membrane. Residues 253-273 (LAGVAALIIFLPPSLPFIAVI) traverse the membrane as a helical segment. Glycine 274 is a topological domain (vacuolar). The chain crosses the membrane as a helical span at residues 275–295 (VSSLALGMASFLMIRGIKYLL). At 296–563 (EHSPLNRKQL…QLAQYLLDNH (268 aa)) the chain is on the cytoplasmic side.

It belongs to the chlamydial CPn_0065/CT_288/TC_0561 family. In terms of assembly, interacts with host CCDC146. In host cells infected with C.trachomatis incM, CCDC146 is recruited to the periphery of the pathogen-containing vacuole but recruitment is not dependent on incM.

Its subcellular location is the host vacuole. It is found in the host pathogen-containing vacuole. The protein resides in the host pathogen-containing vacuole membrane. It localises to the host pathogen-containing vacuole lumen. The protein localises to the secreted. Interferes with host cell cytokinesis, centrosome positioning and Golgi distribution, and contributes to the morphology and stability of the pathogen-containing vacuole. May exert its effects by acting directly or indirectly on host microtubules. The polypeptide is Inclusion membrane protein M (Chlamydia trachomatis serovar D (strain ATCC VR-885 / DSM 19411 / UW-3/Cx)).